The following is a 117-amino-acid chain: Immunoglobulin heavy variable 5-51 (117 aa).

Residues 1–19 (MGSTAILALLLAVLQGVCA) form the signal peptide. Positions 20-44 (EVQLVQSGAEVKKPGESLKISCKGS) are framework-1. An Ig-like domain is found at 20 to 117 (EVQLVQSGAE…SDTAMYYCAR (98 aa)). An intrachain disulfide couples C41 to C115. Positions 45-52 (GYSFTSYW) are complementarity-determining-1. Residues 53–69 (IGWVRQMPGKGLEWMGI) form a framework-2 region. Residues 70–77 (IYPGDSDT) are complementarity-determining-2. Residues 78 to 115 (RYSPSFQGQVTISADKSISTAYLQWSSLKASDTAMYYC) form a framework-3 region. The interval 116–117 (AR) is complementarity-determining-3.

As to quaternary structure, immunoglobulins are composed of two identical heavy chains and two identical light chains; disulfide-linked.

The protein localises to the secreted. It is found in the cell membrane. In terms of biological role, v region of the variable domain of immunoglobulin heavy chains that participates in the antigen recognition. Immunoglobulins, also known as antibodies, are membrane-bound or secreted glycoproteins produced by B lymphocytes. In the recognition phase of humoral immunity, the membrane-bound immunoglobulins serve as receptors which, upon binding of a specific antigen, trigger the clonal expansion and differentiation of B lymphocytes into immunoglobulins-secreting plasma cells. Secreted immunoglobulins mediate the effector phase of humoral immunity, which results in the elimination of bound antigens. The antigen binding site is formed by the variable domain of one heavy chain, together with that of its associated light chain. Thus, each immunoglobulin has two antigen binding sites with remarkable affinity for a particular antigen. The variable domains are assembled by a process called V-(D)-J rearrangement and can then be subjected to somatic hypermutations which, after exposure to antigen and selection, allow affinity maturation for a particular antigen. This chain is Immunoglobulin heavy variable 5-51, found in Homo sapiens (Human).